We begin with the raw amino-acid sequence, 74 residues long: Kappa-stichotoxin-Shd5a (74 aa).

The signal sequence occupies residues 1–22; the sequence is MKFQVIAAVLLIAFCLCVVVTA. A propeptide spanning residues 23-39 is cleaved from the precursor; it reads RMELQDVEDVENGFQKR. Residues 42 to 74 form the ShKT domain; that stretch reads CIDTIPQSRCTAFQCKHSMKYRLSFCRKTCGTC. 3 disulfides stabilise this stretch: C42–C74, C51–C67, and C56–C71.

The protein belongs to the sea anemone type 1 potassium channel toxin family. Type 1a subfamily.

It is found in the secreted. Its subcellular location is the nematocyst. Inhibits voltage-gated potassium channels (Kv) with higher potency for Kv1.1/KCNA1 and Kv1.3/KCNA3. This chain is Kappa-stichotoxin-Shd5a, found in Stichodactyla haddoni (Saddle carpet anemone).